The following is a 260-amino-acid chain: Thiazole synthase (260 aa).

Catalysis depends on Lys-96, which acts as the Schiff-base intermediate with DXP. 1-deoxy-D-xylulose 5-phosphate is bound by residues Gly-157, 184 to 185 (AG), and 206 to 207 (NT).

Belongs to the ThiG family. In terms of assembly, homotetramer. Forms heterodimers with either ThiH or ThiS.

The protein resides in the cytoplasm. The enzyme catalyses [ThiS sulfur-carrier protein]-C-terminal-Gly-aminoethanethioate + 2-iminoacetate + 1-deoxy-D-xylulose 5-phosphate = [ThiS sulfur-carrier protein]-C-terminal Gly-Gly + 2-[(2R,5Z)-2-carboxy-4-methylthiazol-5(2H)-ylidene]ethyl phosphate + 2 H2O + H(+). Its pathway is cofactor biosynthesis; thiamine diphosphate biosynthesis. In terms of biological role, catalyzes the rearrangement of 1-deoxy-D-xylulose 5-phosphate (DXP) to produce the thiazole phosphate moiety of thiamine. Sulfur is provided by the thiocarboxylate moiety of the carrier protein ThiS. In vitro, sulfur can be provided by H(2)S. The chain is Thiazole synthase from Rhodopseudomonas palustris (strain HaA2).